A 443-amino-acid polypeptide reads, in one-letter code: MSDMEDDFMCDDEEDYDLEYSEDSNSEPNVDLENQYYNSKALKEDDPKAALSSFQKVLELEGEKGEWGFKALKQMIKINFKLTNFPEMMNRYKQLLTYIRSAVTRNYSEKSINSILDYISTSKQMDLLQEFYETTLEALKDAKNDRLWFKTNTKLGKLYLEREEYGKLQKILRQLHQSCQTDDGEDDLKKGTQLLEIYALEIQMYTAQKNNKKLKALYEQSLHIKSAIPHPLIMGVIRECGGKMHLREGEFEKAHTDFFEAFKNYDESGSPRRTTCLKYLVLANMLMKSGINPFDSQEAKPYKNDPEILAMTNLVSAYQNNDITEFEKILKTNHSNIMDDPFIREHIEELLRNIRTQVLIKLIKPYTRIHIPFISKELNIDVADVESLLVQCILDNTIHGRIDQVNQLLELDHQKRGGARYTALDKWTNQLNSLNQAVVSKLA.

The tract at residues 1 to 275 (MSDMEDDFMC…DESGSPRRTT (275 aa)) is mediates interaction with NIF3L1. Positions 254–416 (AHTDFFEAFK…QLLELDHQKR (163 aa)) constitute a PCI domain.

It belongs to the CSN2 family. As to quaternary structure, component of the CSN complex, composed of COPS1/GPS1, COPS2, COPS3, COPS4, COPS5, COPS6, COPS7 (COPS7A or COPS7B), COPS8 and COPS9 isoform 1. In the complex, it probably interacts directly with COPS1, COPS4, COPS5, COPS6 and COPS7 (COPS7A or COPS7B). Specifically interacts with the ligand binding domain of the thyroid receptor (TR). Does not require the presence of thyroid hormone for its interaction. Interacts with CUL1 and CUL2. Interacts with IRF8/ICSBP1 and with nuclear receptors NR2F1 and NR0B1. Interacts with NIF3L1. Phosphorylated by CK2 and PKD kinases.

The protein localises to the cytoplasm. The protein resides in the nucleus. Essential component of the COP9 signalosome complex (CSN), a complex involved in various cellular and developmental processes. The CSN complex is an essential regulator of the ubiquitin (Ubl) conjugation pathway by mediating the deneddylation of the cullin subunits of SCF-type E3 ligase complexes, leading to decrease the Ubl ligase activity of SCF-type complexes such as SCF, CSA or DDB2. The complex is also involved in phosphorylation of p53/TP53, c-jun/JUN, IkappaBalpha/NFKBIA, ITPK1 and IRF8/ICSBP, possibly via its association with CK2 and PKD kinases. CSN-dependent phosphorylation of TP53 and JUN promotes and protects degradation by the Ubl system, respectively. Involved in early stage of neuronal differentiation via its interaction with NIF3L1. This is COP9 signalosome complex subunit 2 (COPS2) from Homo sapiens (Human).